The chain runs to 157 residues: MSQVILDLQLACEETSGLPDEALFQRWVDAVIPPFQEESELTIRLVDVAESHELNLTYRGKDKPTNVLSFPFEAPPGIEMPLLGDLIICRQVVEQEASEQGKPLEAHWAHMVVHGSLHLLGYDHIEDDEAEEMEGLETEIMLALGYEDPYISEKIAE.

Zn(2+)-binding residues include histidine 114, histidine 118, and histidine 124.

This sequence belongs to the endoribonuclease YbeY family. The cofactor is Zn(2+).

The protein localises to the cytoplasm. Functionally, single strand-specific metallo-endoribonuclease involved in late-stage 70S ribosome quality control and in maturation of the 3' terminus of the 16S rRNA. This Klebsiella pneumoniae (strain 342) protein is Endoribonuclease YbeY.